The sequence spans 385 residues: Bifunctional chorismate mutase/prephenate dehydratase (385 aa).

The Chorismate mutase domain maps to 1–92 (MPSKNDLLSF…ESVLTQKKLL (92 aa)). Positions 11, 28, 39, 48, 52, 84, and 88 each coordinate substrate. The region spanning 105 to 285 (SFSFLGPKGS…NITRFILLSR (181 aa)) is the Prephenate dehydratase domain. Positions 286–385 (KPVSISSKIP…PSENITPIIP (100 aa)) are regulatory. The region spanning 299 to 376 (TLIFNTGQES…KFIKILGCYP (78 aa)) is the ACT domain.

It localises to the cytoplasm. It catalyses the reaction chorismate = prephenate. It carries out the reaction prephenate + H(+) = 3-phenylpyruvate + CO2 + H2O. Its pathway is amino-acid biosynthesis; L-phenylalanine biosynthesis; phenylpyruvate from prephenate: step 1/1. It participates in metabolic intermediate biosynthesis; prephenate biosynthesis; prephenate from chorismate: step 1/1. In terms of biological role, catalyzes the Claisen rearrangement of chorismate to prephenate and the decarboxylation/dehydration of prephenate to phenylpyruvate. This chain is Bifunctional chorismate mutase/prephenate dehydratase (pheA), found in Buchnera aphidicola subsp. Schizaphis graminum (strain Sg).